A 376-amino-acid chain; its full sequence is MASILALDGLYAEVPKFLPEALREGCAGKKPLSFYIQQILNLMGCDGDEYHVLFTSSSEEANTHMITAAVRRHLLRTRQRPHVIIGAAEPPSVTECVKALAREKRCVYTIIPLKNFEIDPVAVYDAIQSNTCLACISGTNAVVKTFNKLQDISNVLRGIPLHSEVSDLVYQGCIQQNPPADSFSLNSLYGFLGVGVLGMKKKVMQDLGPLIFGGGLRGGSPNIPGIHAMYRTLIQQRPSIKKINTIHKLFIKTLKKHQHVYLPGLSIEDVPSNGMPVEVPKGLPGYILFSVGHSAEELQKKIFTKFNVKVGRIVNLQEMLFRIKIPQKYWETLLFIQLRDVLTKEDIKRVMVVLMYLDTITPRGSLPPPSHSSSFS.

Residues 58–59 (SE) and 184–186 (SLN) contribute to the pyridoxal 5'-phosphate site.

The protein belongs to the class-V pyridoxal-phosphate-dependent aminotransferase family. NifS/IscS subfamily. It depends on pyridoxal 5'-phosphate as a cofactor.

It is found in the virion. This chain is NifS-like protein, found in African swine fever virus (isolate Tick/Malawi/Lil 20-1/1983) (ASFV).